The primary structure comprises 108 residues: Large ribosomal subunit protein uL23 (108 aa).

The protein belongs to the universal ribosomal protein uL23 family. As to quaternary structure, part of the 50S ribosomal subunit. Contacts protein L29, and trigger factor when it is bound to the ribosome.

One of the early assembly proteins it binds 23S rRNA. One of the proteins that surrounds the polypeptide exit tunnel on the outside of the ribosome. Forms the main docking site for trigger factor binding to the ribosome. The chain is Large ribosomal subunit protein uL23 from Mycoplasmoides gallisepticum (strain R(low / passage 15 / clone 2)) (Mycoplasma gallisepticum).